Consider the following 347-residue polypeptide: Peroxidase C2 (347 aa).

Residues 1-24 (MHSSSSLIKLGFLLLLLNVSLSHA) form the signal peptide. Cystine bridges form between cysteine 35–cysteine 115, cysteine 68–cysteine 73, cysteine 121–cysteine 325, and cysteine 201–cysteine 233. Histidine 66 functions as the Proton acceptor in the catalytic mechanism. Positions 67, 70, 72, 74, and 76 each coordinate Ca(2+). Residue asparagine 81 is glycosylated (N-linked (GlcNAc...) asparagine). Proline 163 contacts substrate. Histidine 194 is a heme b binding site. Threonine 195 is a Ca(2+) binding site. Asparagine 210 and asparagine 238 each carry an N-linked (GlcNAc...) asparagine glycan. Aspartate 246, threonine 249, and aspartate 254 together coordinate Ca(2+).

This sequence belongs to the peroxidase family. Classical plant (class III) peroxidase subfamily. Requires Ca(2+) as cofactor. Heme b is required as a cofactor.

The protein localises to the secreted. Its subcellular location is the vacuole. The catalysed reaction is 2 a phenolic donor + H2O2 = 2 a phenolic radical donor + 2 H2O. Removal of H(2)O(2), oxidation of toxic reductants, biosynthesis and degradation of lignin, suberization, auxin catabolism, response to environmental stresses such as wounding, pathogen attack and oxidative stress. These functions might be dependent on each isozyme/isoform in each plant tissue. In Armoracia rusticana (Horseradish), this protein is Peroxidase C2 (PRXC2).